The chain runs to 78 residues: MAQQRRGGRRRRKVDFIAANHIEYIDYKDTDLLRRFISERGKILPRRVTGTSAKNQRRLTIAIKRARIMGLLPFVAED.

It belongs to the bacterial ribosomal protein bS18 family. In terms of assembly, part of the 30S ribosomal subunit. Forms a tight heterodimer with protein bS6.

Functionally, binds as a heterodimer with protein bS6 to the central domain of the 16S rRNA, where it helps stabilize the platform of the 30S subunit. The protein is Small ribosomal subunit protein bS18 of Limosilactobacillus fermentum (strain NBRC 3956 / LMG 18251) (Lactobacillus fermentum).